Consider the following 239-residue polypeptide: Tryptophan synthase alpha chain (239 aa).

Catalysis depends on proton acceptor residues Glu-34 and Asp-45.

Belongs to the TrpA family. As to quaternary structure, tetramer of two alpha and two beta chains.

It carries out the reaction (1S,2R)-1-C-(indol-3-yl)glycerol 3-phosphate + L-serine = D-glyceraldehyde 3-phosphate + L-tryptophan + H2O. It participates in amino-acid biosynthesis; L-tryptophan biosynthesis; L-tryptophan from chorismate: step 5/5. Its function is as follows. The alpha subunit is responsible for the aldol cleavage of indoleglycerol phosphate to indole and glyceraldehyde 3-phosphate. The chain is Tryptophan synthase alpha chain from Thermotoga petrophila (strain ATCC BAA-488 / DSM 13995 / JCM 10881 / RKU-1).